The primary structure comprises 503 residues: von Willebrand factor A domain-containing protein 1 (503 aa).

An N-terminal signal peptide occupies residues 1 to 21 (MEVRKALTCVFLTVFLCSGDA). Residues 36–213 (DVLFLLDSSG…IIGEDLRNSI (178 aa)) form the VWFA domain. 2 consecutive Fibronectin type-III domains span residues 218–324 (RAER…TVNP) and 331–423 (LLSS…VLPA).

Homodimer or homomultimer; disulfide-linked.

It is found in the secreted. The protein resides in the extracellular space. Its subcellular location is the extracellular matrix. It localises to the basement membrane. Promotes matrix assembly. Involved in the organization of skeletal muscles and in the formation of neuromuscular junctions. In Danio rerio (Zebrafish), this protein is von Willebrand factor A domain-containing protein 1.